The following is a 292-amino-acid chain: AKT-interacting protein homolog B (292 aa).

The tract at residues 1 to 44 (MNPFWNMPSASVRKRSDNDEKIATADQKISPARSSSAKKQLPSI) is disordered. The segment covering 14–23 (KRSDNDEKIA) has biased composition (basic and acidic residues). The region spanning 75–223 (YLEYSLLAEF…VVDSVKLCNS (149 aa)) is the UBC core domain.

This sequence belongs to the ubiquitin-conjugating enzyme family. FTS subfamily.

It localises to the cytoplasm. The protein localises to the cell membrane. May function to promote vesicle trafficking and/or fusion. May also regulate apoptosis. The protein is AKT-interacting protein homolog B (aktip-b) of Xenopus laevis (African clawed frog).